Consider the following 273-residue polypeptide: 2,3,4,5-tetrahydropyridine-2,6-dicarboxylate N-succinyltransferase (273 aa).

Residues Arg-105 and Asp-142 each contribute to the substrate site.

It belongs to the transferase hexapeptide repeat family. In terms of assembly, homotrimer.

The protein localises to the cytoplasm. The catalysed reaction is (S)-2,3,4,5-tetrahydrodipicolinate + succinyl-CoA + H2O = (S)-2-succinylamino-6-oxoheptanedioate + CoA. It functions in the pathway amino-acid biosynthesis; L-lysine biosynthesis via DAP pathway; LL-2,6-diaminopimelate from (S)-tetrahydrodipicolinate (succinylase route): step 1/3. In Bordetella avium (strain 197N), this protein is 2,3,4,5-tetrahydropyridine-2,6-dicarboxylate N-succinyltransferase.